A 217-amino-acid chain; its full sequence is UPF0502 protein VF_A0604 (217 aa).

Belongs to the UPF0502 family.

The protein is UPF0502 protein VF_A0604 of Aliivibrio fischeri (strain ATCC 700601 / ES114) (Vibrio fischeri).